A 458-amino-acid chain; its full sequence is Gamma aminobutyrate transaminase 2 (458 aa).

114-115 (GS) contributes to the pyridoxal 5'-phosphate binding site. Tyr147 contacts substrate. Asp254 is a binding site for pyridoxal 5'-phosphate. Lys283 is a substrate binding site. Lys283 is modified (N6-(pyridoxal phosphate)lysine).

This sequence belongs to the class-III pyridoxal-phosphate-dependent aminotransferase family. As to expression, expressed in leaves, roots, stems, flowers and fruits. Expressed in carpels, but not in stamens.

Its subcellular location is the cytoplasm. The enzyme catalyses 4-aminobutanoate + pyruvate = succinate semialdehyde + L-alanine. It carries out the reaction 4-aminobutanoate + glyoxylate = succinate semialdehyde + glycine. Its function is as follows. Transaminase that degrades gamma-amino butyric acid (GABA) and uses pyruvate or glyoxylate as amino-group acceptor. Cannot use beta-alanine, ornithine, acetylornithine, serine, glycine, asparagine, glutamine, glutamate, valine, leucine, isoleucine, methionine, phenylalanine, histidine, lysine, arginine, aspartate, threonine, tyrosine, tryptophan, proline, or cysteine as amino donors. May be responsible for establishing the GABA gradient in the carpel. This Solanum lycopersicum (Tomato) protein is Gamma aminobutyrate transaminase 2 (GABA-TP2).